Here is a 179-residue protein sequence, read N- to C-terminus: Large ribosomal subunit protein uL5 (179 aa).

The protein belongs to the universal ribosomal protein uL5 family. Part of the 50S ribosomal subunit; part of the 5S rRNA/L5/L18/L25 subcomplex. Contacts the 5S rRNA and the P site tRNA. Forms a bridge to the 30S subunit in the 70S ribosome.

This is one of the proteins that bind and probably mediate the attachment of the 5S RNA into the large ribosomal subunit, where it forms part of the central protuberance. In the 70S ribosome it contacts protein S13 of the 30S subunit (bridge B1b), connecting the 2 subunits; this bridge is implicated in subunit movement. Contacts the P site tRNA; the 5S rRNA and some of its associated proteins might help stabilize positioning of ribosome-bound tRNAs. In Nitrosomonas europaea (strain ATCC 19718 / CIP 103999 / KCTC 2705 / NBRC 14298), this protein is Large ribosomal subunit protein uL5.